A 201-amino-acid chain; its full sequence is FMN-dependent NADH:quinone oxidoreductase (201 aa).

FMN-binding positions include Ser-10, 16 to 18, 96 to 99, and 140 to 143; these read SQS, MYNF, and SRGG.

This sequence belongs to the azoreductase type 1 family. Homodimer. FMN is required as a cofactor.

The catalysed reaction is 2 a quinone + NADH + H(+) = 2 a 1,4-benzosemiquinone + NAD(+). The enzyme catalyses N,N-dimethyl-1,4-phenylenediamine + anthranilate + 2 NAD(+) = 2-(4-dimethylaminophenyl)diazenylbenzoate + 2 NADH + 2 H(+). Functionally, quinone reductase that provides resistance to thiol-specific stress caused by electrophilic quinones. Its function is as follows. Also exhibits azoreductase activity. Catalyzes the reductive cleavage of the azo bond in aromatic azo compounds to the corresponding amines. This is FMN-dependent NADH:quinone oxidoreductase from Salmonella arizonae (strain ATCC BAA-731 / CDC346-86 / RSK2980).